A 201-amino-acid polypeptide reads, in one-letter code: Large ribosomal subunit protein uL4 (201 aa).

A disordered region spans residues 44-71 (RAQKTRAEVSGSGKKPWRQKGTGRARSG).

The protein belongs to the universal ribosomal protein uL4 family. As to quaternary structure, part of the 50S ribosomal subunit.

Its function is as follows. One of the primary rRNA binding proteins, this protein initially binds near the 5'-end of the 23S rRNA. It is important during the early stages of 50S assembly. It makes multiple contacts with different domains of the 23S rRNA in the assembled 50S subunit and ribosome. Forms part of the polypeptide exit tunnel. The chain is Large ribosomal subunit protein uL4 from Photorhabdus laumondii subsp. laumondii (strain DSM 15139 / CIP 105565 / TT01) (Photorhabdus luminescens subsp. laumondii).